A 424-amino-acid chain; its full sequence is T-DNA border endonuclease VirD2 (424 aa).

Disordered stretches follow at residues 206–269 and 321–424; these read AQKI…GSSI and RPVT…RGGT. Residues 212 to 221 are compositionally biased toward acidic residues; it reads EDTDFDETSP. Positions 243–261 are enriched in basic and acidic residues; it reads EPDRATRHDKQPLEQHARF. Residues 330-339 are compositionally biased toward basic residues; that stretch reads TVKRQQRSKR. Basic and acidic residues-rich tracts occupy residues 394–408 and 415–424; these read SPKR…ELGG and NRRDDGRGGT.

Tumor formation by A.tumefaciens involves the transfer and integration of a defined segment (T-DNA) of Ti plasmid DNA into the plant nuclear genome. The virD operon encodes a site-specific endonuclease that cleaves at a unique site within both 24 bp direct repeats flanking the T-DNA. The chain is T-DNA border endonuclease VirD2 (virD2) from Rhizobium radiobacter (Agrobacterium tumefaciens).